Reading from the N-terminus, the 427-residue chain is Enolase (427 aa).

Glutamine 162 is a (2R)-2-phosphoglycerate binding site. The active-site Proton donor is the glutamate 204. Residues aspartate 241, glutamate 282, and aspartate 309 each contribute to the Mg(2+) site. (2R)-2-phosphoglycerate-binding residues include lysine 334, arginine 363, serine 364, and lysine 385. Lysine 334 acts as the Proton acceptor in catalysis.

This sequence belongs to the enolase family. The cofactor is Mg(2+).

The protein localises to the cytoplasm. The protein resides in the secreted. It localises to the cell surface. The catalysed reaction is (2R)-2-phosphoglycerate = phosphoenolpyruvate + H2O. Its pathway is carbohydrate degradation; glycolysis; pyruvate from D-glyceraldehyde 3-phosphate: step 4/5. Functionally, catalyzes the reversible conversion of 2-phosphoglycerate (2-PG) into phosphoenolpyruvate (PEP). It is essential for the degradation of carbohydrates via glycolysis. This Frankia alni (strain DSM 45986 / CECT 9034 / ACN14a) protein is Enolase.